A 97-amino-acid chain; its full sequence is YcgL domain-containing protein PSPTO_3921 (97 aa).

In terms of domain architecture, YcgL spans 3–87 (RICSIYRSPK…AEDEYIEHLP (85 aa)).

This chain is YcgL domain-containing protein PSPTO_3921, found in Pseudomonas syringae pv. tomato (strain ATCC BAA-871 / DC3000).